The sequence spans 299 residues: N-acetylmuramic acid 6-phosphate etherase (299 aa).

The SIS domain occupies 54–217 (TIAQYKKGGR…STITMVGVGK (164 aa)). Glutamate 82 serves as the catalytic Proton donor. Glutamate 113 is a catalytic residue.

The protein belongs to the GCKR-like family. MurNAc-6-P etherase subfamily. Homodimer.

The catalysed reaction is N-acetyl-D-muramate 6-phosphate + H2O = N-acetyl-D-glucosamine 6-phosphate + (R)-lactate. Its pathway is amino-sugar metabolism; N-acetylmuramate degradation. In terms of biological role, specifically catalyzes the cleavage of the D-lactyl ether substituent of MurNAc 6-phosphate, producing GlcNAc 6-phosphate and D-lactate. This is N-acetylmuramic acid 6-phosphate etherase from Staphylococcus aureus (strain bovine RF122 / ET3-1).